The following is a 349-amino-acid chain: Acyl-CoA:acyl-CoA alkyltransferase (349 aa).

Glutamate 97 (proton acceptor) is an active-site residue. Cysteine 123 functions as the Acyl-thioester intermediate in the catalytic mechanism.

This sequence belongs to the thiolase-like superfamily. OleA family.

The enzyme catalyses a 1,2-saturated acyl-CoA + an acyl-CoA + H2O = an (R)-2-alkyl-3-oxoalkanoate + 2 CoA + H(+). Its function is as follows. Involved in olefin biosynthesis. Catalyzes a non-decarboxylative head-to-head Claisen condensation of two acyl-CoA molecules, generating an (R)-2-alkyl-3-oxoalkanoate. The S.oneidensis oleABCD genes produce 3,6,9,12,15,19,22,25,28-hentriacontanonaene, which may aid the cells in adapting to a sudden drop in temperature. The chain is Acyl-CoA:acyl-CoA alkyltransferase from Shewanella oneidensis (strain ATCC 700550 / JCM 31522 / CIP 106686 / LMG 19005 / NCIMB 14063 / MR-1).